Reading from the N-terminus, the 37-residue chain is Cytochrome b6-f complex subunit 5 (37 aa).

A helical transmembrane segment spans residues 5–25 (LLSGIVLGLVPVTITGLFVAA).

Belongs to the PetG family. The 4 large subunits of the cytochrome b6-f complex are cytochrome b6, subunit IV (17 kDa polypeptide, PetD), cytochrome f and the Rieske protein, while the 4 small subunits are PetG, PetL, PetM and PetN. The complex functions as a dimer.

The protein localises to the plastid. It is found in the chloroplast thylakoid membrane. In terms of biological role, component of the cytochrome b6-f complex, which mediates electron transfer between photosystem II (PSII) and photosystem I (PSI), cyclic electron flow around PSI, and state transitions. PetG is required for either the stability or assembly of the cytochrome b6-f complex. This Emiliania huxleyi (Coccolithophore) protein is Cytochrome b6-f complex subunit 5.